Reading from the N-terminus, the 360-residue chain is Phospho-N-acetylmuramoyl-pentapeptide-transferase (360 aa).

Helical transmembrane passes span 25 to 45 (RAIL…PTLI), 73 to 93 (TMGG…WADL), 97 to 117 (YVWV…VDDY), 128 to 148 (LIAK…AVYL), 168 to 188 (VMPQ…VGTS), 199 to 219 (GLAI…AYVS), 236 to 256 (TAEL…FLWF), 262 to 282 (LVFM…IIAI), 288 to 308 (LVLF…MLQV), and 338 to 358 (VIVR…ATLK).

It belongs to the glycosyltransferase 4 family. MraY subfamily. The cofactor is Mg(2+).

The protein localises to the cell inner membrane. The enzyme catalyses UDP-N-acetyl-alpha-D-muramoyl-L-alanyl-gamma-D-glutamyl-meso-2,6-diaminopimeloyl-D-alanyl-D-alanine + di-trans,octa-cis-undecaprenyl phosphate = di-trans,octa-cis-undecaprenyl diphospho-N-acetyl-alpha-D-muramoyl-L-alanyl-D-glutamyl-meso-2,6-diaminopimeloyl-D-alanyl-D-alanine + UMP. It participates in cell wall biogenesis; peptidoglycan biosynthesis. Catalyzes the initial step of the lipid cycle reactions in the biosynthesis of the cell wall peptidoglycan: transfers peptidoglycan precursor phospho-MurNAc-pentapeptide from UDP-MurNAc-pentapeptide onto the lipid carrier undecaprenyl phosphate, yielding undecaprenyl-pyrophosphoryl-MurNAc-pentapeptide, known as lipid I. In Idiomarina loihiensis (strain ATCC BAA-735 / DSM 15497 / L2-TR), this protein is Phospho-N-acetylmuramoyl-pentapeptide-transferase.